The primary structure comprises 588 residues: Calicin (588 aa).

The BTB domain maps to Trp-28–Glu-98. Residues Cys-133 to Phe-235 enclose the BACK domain. The residue at position 149 (Ser-149) is a Phosphoserine. Kelch repeat units follow at residues Ser-280 to Arg-327, Tyr-328 to Gly-375, Val-377 to Asp-423, Asn-425 to Gln-475, Asp-476 to Ser-525, and Lys-526 to Leu-580.

Interacts with CYLC1; the interaction may be relevant for proper acrosome attachment to the nuclear envelope.

It is found in the cytoplasm. The protein resides in the cytoskeleton. The protein localises to the perinuclear theca. It localises to the calyx. In terms of biological role, required for both nuclear and acrosomal shaping during spermiogenesis. This Rattus norvegicus (Rat) protein is Calicin (Ccin).